The primary structure comprises 366 residues: Homer protein homolog 1 (366 aa).

An N-acetylglycine modification is found at Gly-2. The 109-residue stretch at 2 to 110 (GEQPIFSTRA…EKFQEFKEAA (109 aa)) folds into the WH1 domain. The tract at residues 114–189 (KEKSQEKMEL…RTQALSHASS (76 aa)) is disordered. 2 stretches are compositionally biased toward polar residues: residues 138–147 (SPLTPESING) and 155–170 (DVTQ…TQNA). Residues 193–364 (KHWEAELATL…LRDNLAKLLE (172 aa)) adopt a coiled-coil conformation. A required for tetramerization region spans residues 302 to 366 (KLQEVEIRNK…DNLAKLLECS (65 aa)). The residue at position 318 (Ser-318) is a Phosphoserine.

The protein belongs to the Homer family. As to quaternary structure, tetramer; this tetrameric structure is critical for forming the high-order complex with SHANK1, which in turn is necessary for the structural and functional integrity of dendritic spines. Isoform 1, isoform 2 and isoform 3 encode a coiled-coil structure that mediates homo- and heteromultimerization. Interacts with GRM1, GRM5, ITPR1, DNM3, RYR1, RYR2 and SHANK3. Interacts with IFT57 and OPHN1. Interacts with SHANK1; forms high-order polymerized complex with a mesh-like network structure, at least composed of SHANK1, HOMER1 and DLGAP1; the complex formation is SHANK1 multimerization dependent. Interacts with NFATC4. Interacts with DAGLA (via PPXXF motif); this interaction is required for the cell membrane localization of DAGLA. Interacts with SRGAP2. As to expression, expressed in skeletal muscle at the level of the Z line, in the forebrain and cerebellum. In terms of tissue distribution, expressed in cardiac and skeletal muscle. Expressed in the hippocampus. As to expression, expressed in skeletal muscle at the level of the Z line, in the heart, forebrain and cerebellum.

It is found in the cytoplasm. It localises to the postsynaptic density. The protein localises to the synapse. Its subcellular location is the cell projection. The protein resides in the dendritic spine. Functionally, postsynaptic density scaffolding protein. Binds and cross-links cytoplasmic regions of GRM1, GRM5, ITPR1, DNM3, RYR1, RYR2, SHANK1 and SHANK3. By physically linking GRM1 and GRM5 with ER-associated ITPR1 receptors, it aids the coupling of surface receptors to intracellular calcium release. May also couple GRM1 to PI3 kinase through its interaction with AGAP2. Isoform 1 regulates the trafficking and surface expression of GRM5. Differentially regulates the functions of the calcium activated channel ryanodine receptors RYR1 and RYR2. Isoform 1 decreases the activity of RYR2, and increases the activity of RYR1, whereas isoform 5 counteracts the effects by competing for binding sites. Isoform 3 regulates the trafficking and surface expression of GRM5. Isoform 5 acts as a natural dominant negative, in dynamic competition with constitutively expressed isoform 1, isoform 2 and isoform 3 to regulate synaptic metabotropic glutamate function. Isoform 5, may be involved in the structural changes that occur at synapses during long-lasting neuronal plasticity and development. Forms a high-order complex with SHANK1, which in turn is necessary for the structural and functional integrity of dendritic spines. Negatively regulates T cell activation by inhibiting the calcineurin-NFAT pathway. Acts by competing with calcineurin/PPP3CA for NFAT protein binding, hence preventing NFAT activation by PPP3CA. This chain is Homer protein homolog 1, found in Mus musculus (Mouse).